A 330-amino-acid polypeptide reads, in one-letter code: Probable WRKY transcription factor 39 (330 aa).

Positions 256 to 322 (KIADIPPDEY…YEGEHNHSRI (67 aa)) form a DNA-binding region, WRKY.

It localises to the nucleus. In terms of biological role, transcription factor. Interacts specifically with the W box (5'-(T)TGAC[CT]-3'), a frequently occurring elicitor-responsive cis-acting element. This Arabidopsis thaliana (Mouse-ear cress) protein is Probable WRKY transcription factor 39 (WRKY39).